Consider the following 527-residue polypeptide: T-complex protein 1 subunit beta (527 aa).

At S2 the chain carries N-acetylserine.

It belongs to the TCP-1 chaperonin family. As to quaternary structure, heterooligomeric complex of about 850 to 900 kDa that forms two stacked rings, 12 to 16 nm in diameter. Interacts with PLP2; this interaction leads to inhibition of CCT complex mediated actin folding.

It localises to the cytoplasm. Functionally, molecular chaperone; assists the folding of proteins upon ATP hydrolysis. Known to play a role, in vitro, in the folding of actin and tubulin. In yeast may play a role in mitotic spindle formation. This chain is T-complex protein 1 subunit beta (CCT2), found in Saccharomyces cerevisiae (strain ATCC 204508 / S288c) (Baker's yeast).